The primary structure comprises 345 residues: S-adenosylmethionine:tRNA ribosyltransferase-isomerase (345 aa).

This sequence belongs to the QueA family. In terms of assembly, monomer.

The protein localises to the cytoplasm. It carries out the reaction 7-aminomethyl-7-carbaguanosine(34) in tRNA + S-adenosyl-L-methionine = epoxyqueuosine(34) in tRNA + adenine + L-methionine + 2 H(+). It participates in tRNA modification; tRNA-queuosine biosynthesis. Transfers and isomerizes the ribose moiety from AdoMet to the 7-aminomethyl group of 7-deazaguanine (preQ1-tRNA) to give epoxyqueuosine (oQ-tRNA). In Helicobacter pylori (strain Shi470), this protein is S-adenosylmethionine:tRNA ribosyltransferase-isomerase.